The chain runs to 252 residues: PF03932 family protein CutC (252 aa).

It belongs to the CutC family.

The protein resides in the cytoplasm. This chain is PF03932 family protein CutC, found in Sodalis glossinidius (strain morsitans).